Reading from the N-terminus, the 405-residue chain is BRCA1-A complex subunit Abraxas 1 (405 aa).

Residues 7–154 (LGVLSGFVLG…CTHCLEHGLY (148 aa)) enclose the MPN domain. Serine 48 bears the Phosphoserine mark. A coiled-coil region spans residues 208–262 (SLKEVRKINEMYAAIQEELKTICQKVEQSEREVEKLLMDVNRLKEVRKKQQAQAK). The interval 333-405 (ASPAPAAPLS…DTDYPRSPTF (73 aa)) is disordered. Phosphoserine occurs at positions 382, 383, 392, and 402. Residues 386–397 (IDTEVGSPEDDT) show a composition bias toward acidic residues. A pSXXF motif motif is present at residues 402–405 (SPTF).

Belongs to the FAM175 family. Abraxas subfamily. In terms of assembly, component of the ARISC complex, at least composed of UIMC1/RAP80, ABRAXAS1, BRCC3/BRCC36, BABAM2 and BABAM1/NBA1. Component of the BRCA1-A complex, at least composed of the BRCA1, BARD1, UIMC1/RAP80, ABRAXAS1, BRCC3/BRCC36, BABAM2 and BABAM1/NBA1. In the complex, interacts directly with UIMC1/RAP80, BRCC3/BRCC36 and BABAM2. Homodimer. Interacts directly (when phosphorylated at Ser-402) with BRCA1. The phosphorylated homodimer can interact directly with two BRCA1 chains, giving rise to a heterotetramer. Binds polyubiquitin. Post-translationally, phosphorylation of Ser-402 of the pSXXF motif by ATM or ATR constitutes a specific recognition motif for the BRCT domain of BRCA1.

The protein localises to the nucleus. In terms of biological role, involved in DNA damage response and double-strand break (DSB) repair. Component of the BRCA1-A complex, acting as a central scaffold protein that assembles the various components of the complex and mediates the recruitment of BRCA1. The BRCA1-A complex specifically recognizes 'Lys-63'-linked ubiquitinated histones H2A and H2AX at DNA lesion sites, leading to target the BRCA1-BARD1 heterodimer to sites of DNA damage at DSBs. This complex also possesses deubiquitinase activity that specifically removes 'Lys-63'-linked ubiquitin on histones H2A and H2AX. The sequence is that of BRCA1-A complex subunit Abraxas 1 from Rattus norvegicus (Rat).